The primary structure comprises 466 residues: Glutamate--tRNA ligase (466 aa).

Positions 11 to 21 (PSPTGFIHLGN) match the 'HIGH' region motif. Residues 243–247 (KMSKR) carry the 'KMSKS' region motif. Lys-246 contacts ATP.

The protein belongs to the class-I aminoacyl-tRNA synthetase family. Glutamate--tRNA ligase type 1 subfamily. Monomer.

It localises to the cytoplasm. It carries out the reaction tRNA(Glu) + L-glutamate + ATP = L-glutamyl-tRNA(Glu) + AMP + diphosphate. Catalyzes the attachment of glutamate to tRNA(Glu) in a two-step reaction: glutamate is first activated by ATP to form Glu-AMP and then transferred to the acceptor end of tRNA(Glu). This chain is Glutamate--tRNA ligase, found in Cupriavidus necator (strain ATCC 17699 / DSM 428 / KCTC 22496 / NCIMB 10442 / H16 / Stanier 337) (Ralstonia eutropha).